Here is a 234-residue protein sequence, read N- to C-terminus: Sugar fermentation stimulation protein homolog (234 aa).

This sequence belongs to the SfsA family.

The polypeptide is Sugar fermentation stimulation protein homolog (Shewanella baltica (strain OS155 / ATCC BAA-1091)).